The sequence spans 332 residues: 3'(2'),5'-bisphosphate nucleotidase (332 aa).

Asp49 functions as the Proton acceptor in the catalytic mechanism. Mg(2+)-binding residues include Glu73, Asp129, Ile131, and Asp132. The Proton acceptor role is filled by Thr134. Adenosine 3',5'-bisphosphate is bound by residues Thr134, Ser245, Lys248, Arg262, and Asp274. The AMP site is built by Ser245, Lys248, Arg262, and Asp274. Asp274 is a Mg(2+) binding site.

The protein belongs to the inositol monophosphatase superfamily. Mg(2+) serves as cofactor.

The enzyme catalyses 3'-phosphoadenylyl sulfate + H2O = adenosine 5'-phosphosulfate + phosphate. It carries out the reaction adenosine 3',5'-bisphosphate + H2O = AMP + phosphate. The catalysed reaction is adenosine 2',5'-bisphosphate + H2O = AMP + phosphate. It catalyses the reaction 1D-myo-inositol 1,4-bisphosphate + H2O = 1D-myo-inositol 4-phosphate + phosphate. The enzyme catalyses 1D-myo-inositol 1,3,4-trisphosphate + H2O = 1D-myo-inositol 3,4-bisphosphate + phosphate. In terms of biological role, phosphatase that converts adenosine 3'-phosphate 5'-phosphosulfate (PAPS) to adenosine 5'-phosphosulfate (APS) and 3'(2')-phosphoadenosine 5'-phosphate (PAP) to AMP. Is also able to hydrolyze inositol 1,4-bisphosphate and inositol 1,3,4-trisphosphate. This is 3'(2'),5'-bisphosphate nucleotidase from Dictyostelium discoideum (Social amoeba).